Consider the following 84-residue polypeptide: Small ribosomal subunit protein bS16 (84 aa).

The protein belongs to the bacterial ribosomal protein bS16 family.

The polypeptide is Small ribosomal subunit protein bS16 (Endomicrobium trichonymphae).